The primary structure comprises 360 residues: Heat-inducible transcription repressor HrcA (360 aa).

Belongs to the HrcA family.

Negative regulator of class I heat shock genes (grpE-dnaK-dnaJ and groELS operons). Prevents heat-shock induction of these operons. The chain is Heat-inducible transcription repressor HrcA from Gloeobacter violaceus (strain ATCC 29082 / PCC 7421).